The sequence spans 523 residues: Cytochrome P450 52A3-B (523 aa).

A helical membrane pass occupies residues Trp-17–Leu-34. Residue Cys-471 participates in heme binding.

This sequence belongs to the cytochrome P450 family. Requires heme as cofactor.

The protein resides in the membrane. In terms of biological role, together with an NADPH cytochrome P450 the enzyme system catalyzes the terminal hydroxylation as the first step in the assimilation of alkanes and fatty acids. The chain is Cytochrome P450 52A3-B (CYP52A3-B) from Candida maltosa (Yeast).